The sequence spans 295 residues: Ribosomal protein L11 methyltransferase (295 aa).

S-adenosyl-L-methionine contacts are provided by Thr-146, Gly-167, Asp-189, and Asn-231.

The protein belongs to the methyltransferase superfamily. PrmA family.

The protein localises to the cytoplasm. It carries out the reaction L-lysyl-[protein] + 3 S-adenosyl-L-methionine = N(6),N(6),N(6)-trimethyl-L-lysyl-[protein] + 3 S-adenosyl-L-homocysteine + 3 H(+). Functionally, methylates ribosomal protein L11. The sequence is that of Ribosomal protein L11 methyltransferase from Vibrio vulnificus (strain YJ016).